A 466-amino-acid polypeptide reads, in one-letter code: MTINIYNTLTRKKEEFVPLEPGKVKMYVCGPTVYNYIHIGNARPAIVYDTVRKYLEYSGYDVNFVSNFTDVDDKLIKAANELGEDVPTIADRFIQAYFEDVSALGCKKADLHPRVTENMDDIIAFIETLIEKGYAYEADGDVYYSTRSFEGYGKLSHQSIDELKTGARIRVGEKKRDALDFALWKAAKNQEISWDSPWGEGRPGWHIECSAMVKKYLGDTIDIHAGGQDLTFPHHENEIAQSEALTGKPFAKYWMHNGYINIENEKMSKSLGNFVLVHDIVKEQDPDVLRFFMLSVHYRHPINYSMDLLESTKSAFNRLKTSYANLHHRLESSTNITEDNAKWLAKVEEQRATFISEMNDDFNTANAISVLFELAKQANYYMENDHTSEEVIKAFIGLFQEITSVLGFSLEEKHTLEKEVEALIEQRNEARRNRDFALSDQIRDQLKSMNIVLEDTPQGTRWKRGE.

Cys29 is a Zn(2+) binding site. The 'HIGH' region signature appears at 31–41 (PTVYNYIHIGN). Residues Cys209, His234, and Glu238 each contribute to the Zn(2+) site. Positions 266 to 270 (KMSKS) match the 'KMSKS' region motif. Lys269 provides a ligand contact to ATP. At Ser270 the chain carries Phosphoserine.

It belongs to the class-I aminoacyl-tRNA synthetase family. In terms of assembly, monomer. Zn(2+) serves as cofactor.

The protein localises to the cytoplasm. The enzyme catalyses tRNA(Cys) + L-cysteine + ATP = L-cysteinyl-tRNA(Cys) + AMP + diphosphate. This is Cysteine--tRNA ligase from Bacillus pumilus (strain SAFR-032).